The primary structure comprises 609 residues: UvrABC system protein C (609 aa).

A GIY-YIG domain is found at 16–94 (SSPGVYRMYD…IKQYMPKYNV (79 aa)). In terms of domain architecture, UVR spans 203–238 (QQVTKALVAKMEQAAVELNYEQAARYRDQITALRRV).

It belongs to the UvrC family. Interacts with UvrB in an incision complex.

The protein resides in the cytoplasm. In terms of biological role, the UvrABC repair system catalyzes the recognition and processing of DNA lesions. UvrC both incises the 5' and 3' sides of the lesion. The N-terminal half is responsible for the 3' incision and the C-terminal half is responsible for the 5' incision. This chain is UvrABC system protein C, found in Shewanella piezotolerans (strain WP3 / JCM 13877).